Here is a 507-residue protein sequence, read N- to C-terminus: Chromosomal replication initiator protein DnaA (507 aa).

Residues 1-87 are domain I, interacts with DnaA modulators; the sequence is MSVELWQQCV…IGSKRSSAPR (87 aa). The span at 85–110 shows a compositional bias: low complexity; it reads APRAAPNAPLAAAQVSQAQANAAPAS. The segment at 85 to 158 is disordered; that stretch reads APRAAPNAPL…QQAPVRAEQR (74 aa). The interval 87-170 is domain II; the sequence is RAAPNAPLAA…QVEGALKHTS (84 aa). A compositionally biased stretch (basic and acidic residues) spans 126 to 140; that stretch reads QKTEEISEEPSRDSF. The interval 171–387 is domain III, AAA+ region; it reads YLNRTFTFEN…GALKRVIAHS (217 aa). Residues Gly215, Gly217, Lys218, and Thr219 each contribute to the ATP site. Positions 388 to 507 are domain IV, binds dsDNA; that stretch reads HFMGRDITIE…YKNLLRTLTT (120 aa).

The protein belongs to the DnaA family. Oligomerizes as a right-handed, spiral filament on DNA at oriC.

The protein localises to the cytoplasm. In terms of biological role, plays an essential role in the initiation and regulation of chromosomal replication. ATP-DnaA binds to the origin of replication (oriC) to initiate formation of the DNA replication initiation complex once per cell cycle. Binds the DnaA box (a 9 base pair repeat at the origin) and separates the double-stranded (ds)DNA. Forms a right-handed helical filament on oriC DNA; dsDNA binds to the exterior of the filament while single-stranded (ss)DNA is stabiized in the filament's interior. The ATP-DnaA-oriC complex binds and stabilizes one strand of the AT-rich DNA unwinding element (DUE), permitting loading of DNA polymerase. After initiation quickly degrades to an ADP-DnaA complex that is not apt for DNA replication. Binds acidic phospholipids. This Pseudomonas fluorescens (strain Pf0-1) protein is Chromosomal replication initiator protein DnaA.